Here is a 203-residue protein sequence, read N- to C-terminus: Large ribosomal subunit protein bL25 (203 aa).

Residues methionine 1–cysteine 21 form a disordered region. The span at lysine 12–cysteine 21 shows a compositional bias: basic residues.

This sequence belongs to the bacterial ribosomal protein bL25 family. CTC subfamily. In terms of assembly, part of the 50S ribosomal subunit; part of the 5S rRNA/L5/L18/L25 subcomplex. Contacts the 5S rRNA. Binds to the 5S rRNA independently of L5 and L18.

In terms of biological role, this is one of the proteins that binds to the 5S RNA in the ribosome where it forms part of the central protuberance. The polypeptide is Large ribosomal subunit protein bL25 (Clostridium perfringens (strain 13 / Type A)).